The following is a 257-amino-acid chain: UPF0246 protein YaaA (257 aa).

The protein belongs to the UPF0246 family.

The protein is UPF0246 protein YaaA of Salmonella arizonae (strain ATCC BAA-731 / CDC346-86 / RSK2980).